Consider the following 620-residue polypeptide: DNA mismatch repair protein MutL (620 aa).

A disordered region spans residues 353–375 (SRANGANDFTGRPFSGTERPRGG).

It belongs to the DNA mismatch repair MutL/HexB family.

In terms of biological role, this protein is involved in the repair of mismatches in DNA. It is required for dam-dependent methyl-directed DNA mismatch repair. May act as a 'molecular matchmaker', a protein that promotes the formation of a stable complex between two or more DNA-binding proteins in an ATP-dependent manner without itself being part of a final effector complex. The protein is DNA mismatch repair protein MutL of Chelativorans sp. (strain BNC1).